Here is a 177-residue protein sequence, read N- to C-terminus: Ureidoglycolate lyase (177 aa).

Belongs to the ureidoglycolate lyase family. In terms of assembly, homodimer. Ni(2+) is required as a cofactor.

The catalysed reaction is (S)-ureidoglycolate = urea + glyoxylate. Its pathway is nitrogen metabolism; (S)-allantoin degradation. Catalyzes the catabolism of the allantoin degradation intermediate (S)-ureidoglycolate, generating urea and glyoxylate. Involved in the utilization of allantoin as nitrogen source. The chain is Ureidoglycolate lyase from Burkholderia cepacia (Pseudomonas cepacia).